The chain runs to 252 residues: MSRKPIIAGNWKMNKNPQEAKAFVEAVASKLPSTDLVDVAVAAPAVDLVTTIEAAKDSVLKVAAQNCYFENTGAFTGETSPKVLAEMGADYVVIGHSERRDYFHETDEDINKKAKAIFANGLTPIVCCGESLETYEAGKAVEFVGAQVSAALAGLSAEQVASLVLAYEPIWAIGTGKSATQDDAQNMCKAVRDVVAADFGQEVADKVRVQYGGSVKPENVKDYMACPDVDGALVGGASLEADSFLALLDFLN.

Position 10–12 (10–12) interacts with substrate; that stretch reads NWK. His-96 functions as the Electrophile in the catalytic mechanism. Glu-168 functions as the Proton acceptor in the catalytic mechanism. Substrate-binding positions include Gly-174, Ser-214, and 235–236; that span reads GG.

The protein belongs to the triosephosphate isomerase family. In terms of assembly, homodimer.

It is found in the cytoplasm. The catalysed reaction is D-glyceraldehyde 3-phosphate = dihydroxyacetone phosphate. It functions in the pathway carbohydrate biosynthesis; gluconeogenesis. It participates in carbohydrate degradation; glycolysis; D-glyceraldehyde 3-phosphate from glycerone phosphate: step 1/1. Involved in the gluconeogenesis. Catalyzes stereospecifically the conversion of dihydroxyacetone phosphate (DHAP) to D-glyceraldehyde-3-phosphate (G3P). This Streptococcus pyogenes serotype M1 protein is Triosephosphate isomerase.